Here is a 150-residue protein sequence, read N- to C-terminus: 3-hydroxyacyl-[acyl-carrier-protein] dehydratase FabZ (150 aa).

Histidine 54 is an active-site residue.

The protein belongs to the thioester dehydratase family. FabZ subfamily.

Its subcellular location is the cytoplasm. It carries out the reaction a (3R)-hydroxyacyl-[ACP] = a (2E)-enoyl-[ACP] + H2O. Involved in unsaturated fatty acids biosynthesis. Catalyzes the dehydration of short chain beta-hydroxyacyl-ACPs and long chain saturated and unsaturated beta-hydroxyacyl-ACPs. In Psychromonas ingrahamii (strain DSM 17664 / CCUG 51855 / 37), this protein is 3-hydroxyacyl-[acyl-carrier-protein] dehydratase FabZ.